The following is a 291-amino-acid chain: 6-deoxy-6-sulfogluconolactonase (291 aa).

The a divalent metal cation site is built by Glu17, Asn148, and Asp198. Asp198 serves as the catalytic Proton donor/acceptor.

Belongs to the SMP-30/CGR1 family. A divalent metal cation serves as cofactor.

It carries out the reaction 6-deoxy-6-sulfo-D-glucono-1,5-lactone + H2O = 6-deoxy-6-sulfo-D-gluconate + H(+). Catalyzes the hydrolysis of 6-deoxy-6-sulfo-D-glucono-1,5-lactone to form 6-deoxy-6-sulfo-D-gluconate. Is involved in a degradation pathway of sulfoquinovose (SQ) that allows P.putida SQ1 to use SQ as the sole carbon and energy source for growth. This is 6-deoxy-6-sulfogluconolactonase from Pseudomonas putida (Arthrobacter siderocapsulatus).